Consider the following 284-residue polypeptide: 2-dehydro-3-deoxyphosphooctonate aldolase (284 aa).

It belongs to the KdsA family.

It is found in the cytoplasm. The catalysed reaction is D-arabinose 5-phosphate + phosphoenolpyruvate + H2O = 3-deoxy-alpha-D-manno-2-octulosonate-8-phosphate + phosphate. The protein operates within carbohydrate biosynthesis; 3-deoxy-D-manno-octulosonate biosynthesis; 3-deoxy-D-manno-octulosonate from D-ribulose 5-phosphate: step 2/3. Its pathway is bacterial outer membrane biogenesis; lipopolysaccharide biosynthesis. The polypeptide is 2-dehydro-3-deoxyphosphooctonate aldolase (Paraburkholderia phymatum (strain DSM 17167 / CIP 108236 / LMG 21445 / STM815) (Burkholderia phymatum)).